The sequence spans 441 residues: Protein translocase subunit SecY (441 aa).

The next 10 membrane-spanning stretches (helical) occupy residues 18–38 (ILFT…PSPG), 78–98 (AVGV…TVVI), 124–144 (IALA…GGLL), 157–177 (IFTL…VMWM), 180–200 (LITE…GIAA), 215–235 (GVVF…VVFV), 272–292 (VIPV…TQLI), 318–338 (LVYI…YVSI), 382–402 (IYLG…AGGT), and 403–423 (VQNL…GLDT).

This sequence belongs to the SecY/SEC61-alpha family. In terms of assembly, component of the Sec protein translocase complex. Heterotrimer consisting of SecY, SecE and SecG subunits. The heterotrimers can form oligomers, although 1 heterotrimer is thought to be able to translocate proteins. Interacts with the ribosome. Interacts with SecDF, and other proteins may be involved. Interacts with SecA.

The protein localises to the cell membrane. In terms of biological role, the central subunit of the protein translocation channel SecYEG. Consists of two halves formed by TMs 1-5 and 6-10. These two domains form a lateral gate at the front which open onto the bilayer between TMs 2 and 7, and are clamped together by SecE at the back. The channel is closed by both a pore ring composed of hydrophobic SecY resides and a short helix (helix 2A) on the extracellular side of the membrane which forms a plug. The plug probably moves laterally to allow the channel to open. The ring and the pore may move independently. The polypeptide is Protein translocase subunit SecY (Mycobacterium bovis (strain ATCC BAA-935 / AF2122/97)).